A 424-amino-acid chain; its full sequence is Probable ribonuclease FAU-1 (424 aa).

This sequence belongs to the FAU-1 family.

Functionally, probable RNase involved in rRNA stability through maturation and/or degradation of precursor rRNAs. Binds to RNA in loop regions with AU-rich sequences. The polypeptide is Probable ribonuclease FAU-1 (Saccharolobus islandicus (strain M.16.27) (Sulfolobus islandicus)).